The chain runs to 238 residues: Calmodulin-binding protein 25 (238 aa).

The segment covering 68 to 78 has biased composition (polar residues); the sequence is STNTLSSTVSG. The interval 68–87 is disordered; sequence STNTLSSTVSGASDPEIIGG. A Bipartite nuclear localization signal motif is present at residues 92-108; sequence KRNCLLTDGKAAKRRAR. The VQ signature appears at 125–134; it reads FRQMVQQVTG. Residues 201-220 are disordered; it reads SSVGLPSGKPSATADPGGSA.

As to quaternary structure, interacts with calmodulin (CaM). Interacts with WRKY25 and WRKY51. In terms of tissue distribution, expressed in leaves, flowers and siliques.

The protein localises to the nucleus. Its function is as follows. Calmodulin-binding protein that functions as a negative regulator of osmotic stress tolerance. In Arabidopsis thaliana (Mouse-ear cress), this protein is Calmodulin-binding protein 25.